The primary structure comprises 39 residues: Cytochrome b559 subunit beta (39 aa).

The chain crosses the membrane as a helical span at residues Trp-14 to Ser-30. Residue His-18 participates in heme binding.

It belongs to the PsbE/PsbF family. Heterodimer of an alpha subunit and a beta subunit. PSII is composed of 1 copy each of membrane proteins PsbA, PsbB, PsbC, PsbD, PsbE, PsbF, PsbH, PsbI, PsbJ, PsbK, PsbL, PsbM, PsbT, PsbX, PsbY, PsbZ, Psb30/Ycf12, at least 3 peripheral proteins of the oxygen-evolving complex and a large number of cofactors. It forms dimeric complexes. Heme b serves as cofactor.

The protein resides in the plastid. The protein localises to the chloroplast thylakoid membrane. In terms of biological role, this b-type cytochrome is tightly associated with the reaction center of photosystem II (PSII). PSII is a light-driven water:plastoquinone oxidoreductase that uses light energy to abstract electrons from H(2)O, generating O(2) and a proton gradient subsequently used for ATP formation. It consists of a core antenna complex that captures photons, and an electron transfer chain that converts photonic excitation into a charge separation. The sequence is that of Cytochrome b559 subunit beta from Cucumis sativus (Cucumber).